A 447-amino-acid polypeptide reads, in one-letter code: Rab GDP dissociation inhibitor alpha (447 aa).

At Ser-427 the chain carries Phosphoserine.

It belongs to the Rab GDI family. Interacts with RHOH. Interacts with the non-phosphorylated forms of RAB1A, RAB3A, RAB5A, RAB5B, RAB5C, RAB8A, RAB8B, RAB10, RAB12, RAB35, and RAB43. High expression in brain, lower in other tissues.

It localises to the cytoplasm. It is found in the golgi apparatus. Its subcellular location is the trans-Golgi network. Regulates the GDP/GTP exchange reaction of most Rab proteins by inhibiting the dissociation of GDP from them, and the subsequent binding of GTP to them. Promotes the dissociation of GDP-bound Rab proteins from the membrane and inhibits their activation. Promotes the dissociation of RAB1A, RAB3A, RAB5A and RAB10 from membranes. This Rattus norvegicus (Rat) protein is Rab GDP dissociation inhibitor alpha (Gdi1).